A 343-amino-acid chain; its full sequence is Protein RecA (343 aa).

64–71 (GPESSGKT) contacts ATP.

Belongs to the RecA family.

Its subcellular location is the cytoplasm. Can catalyze the hydrolysis of ATP in the presence of single-stranded DNA, the ATP-dependent uptake of single-stranded DNA by duplex DNA, and the ATP-dependent hybridization of homologous single-stranded DNAs. It interacts with LexA causing its activation and leading to its autocatalytic cleavage. This is Protein RecA from Bacillus cereus (strain ATCC 14579 / DSM 31 / CCUG 7414 / JCM 2152 / NBRC 15305 / NCIMB 9373 / NCTC 2599 / NRRL B-3711).